A 300-amino-acid polypeptide reads, in one-letter code: tRNA dimethylallyltransferase 2 (300 aa).

13–20 (GPTGVGKT) provides a ligand contact to ATP. Position 15-20 (15-20 (TGVGKT)) interacts with substrate. Residues 38 to 41 (DSRQ) form an interaction with substrate tRNA region.

It belongs to the IPP transferase family. As to quaternary structure, monomer. The cofactor is Mg(2+).

The catalysed reaction is adenosine(37) in tRNA + dimethylallyl diphosphate = N(6)-dimethylallyladenosine(37) in tRNA + diphosphate. Catalyzes the transfer of a dimethylallyl group onto the adenine at position 37 in tRNAs that read codons beginning with uridine, leading to the formation of N6-(dimethylallyl)adenosine (i(6)A). The sequence is that of tRNA dimethylallyltransferase 2 from Porphyromonas gingivalis (strain ATCC 33277 / DSM 20709 / CIP 103683 / JCM 12257 / NCTC 11834 / 2561).